We begin with the raw amino-acid sequence, 258 residues long: MLAKRIIPCLDVKSGIVVKGVQFRNHEIVGGILSLAKRYTQEGADELVFYDIEASSNNRLIKKKWVSQIAEIINIPFCVAGGIQTIQDVQSILSSGADKISINSPAISDPYLISRIADRFGVQCVVVGIDSWFNKEESQYYVYQYTGDNTKTIKTSWKTCDWVQKVQALGAGEIVLNVMNQDGMKNGYDLVQLKKIRKICNVPLIASGGAGDYFHFYDVFNEAKVDGALAASVFHNRIIKINQLKKFLMKKGLEIRVC.

Active-site residues include D11 and D130.

This sequence belongs to the HisA/HisF family. In terms of assembly, heterodimer of HisH and HisF.

The protein localises to the cytoplasm. The catalysed reaction is 5-[(5-phospho-1-deoxy-D-ribulos-1-ylimino)methylamino]-1-(5-phospho-beta-D-ribosyl)imidazole-4-carboxamide + L-glutamine = D-erythro-1-(imidazol-4-yl)glycerol 3-phosphate + 5-amino-1-(5-phospho-beta-D-ribosyl)imidazole-4-carboxamide + L-glutamate + H(+). It functions in the pathway amino-acid biosynthesis; L-histidine biosynthesis; L-histidine from 5-phospho-alpha-D-ribose 1-diphosphate: step 5/9. Its function is as follows. IGPS catalyzes the conversion of PRFAR and glutamine to IGP, AICAR and glutamate. The HisF subunit catalyzes the cyclization activity that produces IGP and AICAR from PRFAR using the ammonia provided by the HisH subunit. The polypeptide is Imidazole glycerol phosphate synthase subunit HisF (Buchnera aphidicola subsp. Baizongia pistaciae (strain Bp)).